The chain runs to 370 residues: 3-dehydroquinate synthase (370 aa).

NAD(+) contacts are provided by residues 112–116 (GVVGD), 136–137 (TS), Lys149, Lys158, and 176–179 (TLRT). Zn(2+) contacts are provided by Glu191, His254, and His276.

It belongs to the sugar phosphate cyclases superfamily. Dehydroquinate synthase family. Requires Co(2+) as cofactor. It depends on Zn(2+) as a cofactor. NAD(+) is required as a cofactor.

Its subcellular location is the cytoplasm. It carries out the reaction 7-phospho-2-dehydro-3-deoxy-D-arabino-heptonate = 3-dehydroquinate + phosphate. Its pathway is metabolic intermediate biosynthesis; chorismate biosynthesis; chorismate from D-erythrose 4-phosphate and phosphoenolpyruvate: step 2/7. Its function is as follows. Catalyzes the conversion of 3-deoxy-D-arabino-heptulosonate 7-phosphate (DAHP) to dehydroquinate (DHQ). The sequence is that of 3-dehydroquinate synthase from Xanthomonas oryzae pv. oryzae (strain PXO99A).